The chain runs to 366 residues: N-acetyl-L-citrulline deacetylase (366 aa).

Positions 72 and 103 each coordinate Co(2+). Catalysis depends on Glu130, which acts as the Proton donor/acceptor. Residue Glu155 coordinates Co(2+).

The protein belongs to the peptidase M20A family. N-acetylcitrulline deacetylase subfamily. In terms of assembly, forms homodimers in the crystal, but higher order oligomers may form in solution. The cofactor is Co(2+).

The enzyme catalyses N(2)-acetyl-L-citrulline + H2O = L-citrulline + acetate. The catalysed reaction is N(2)-acetyl-L-ornithine + H2O = L-ornithine + acetate. The protein operates within amino-acid biosynthesis; L-arginine biosynthesis. Its function is as follows. Catalyzes the deacetylation of N-acetyl-L-citrulline to produce L-citrulline. This is a step in an alternative arginine biosynthesis pathway. Is also able to catalyze the deacetylation of N-acetylornithine in vitro, with almost equal velocity. However, this reaction may be not relevant in vivo since Xanthomonas does not possess the canonical argF gene and cannot convert ornithine to citrulline via ArgF'. The polypeptide is N-acetyl-L-citrulline deacetylase (Xanthomonas campestris pv. campestris (strain ATCC 33913 / DSM 3586 / NCPPB 528 / LMG 568 / P 25)).